The primary structure comprises 344 residues: uncharacterized protein (344 aa).

Over residues 323–332 (KQQEQREQGR) the composition is skewed to basic and acidic residues. A disordered region spans residues 323 to 344 (KQQEQREQGRRAAYLQQRGMER).

This is an uncharacterized protein from Bacillus anthracis.